The primary structure comprises 489 residues: Betaine aldehyde dehydrogenase (489 aa).

K(+)-binding residues include Thr26 and Asp93. 150–152 (GAW) is an NAD(+) binding site. The Charge relay system role is filled by Lys162. 176–179 (KPSE) is an NAD(+) binding site. Val180 serves as a coordination point for K(+). Residue 229–232 (GVET) coordinates NAD(+). Leu245 serves as a coordination point for K(+). Residue Glu251 is the Proton acceptor of the active site. Residues Gly253, Cys285, and Glu386 each contribute to the NAD(+) site. The active-site Nucleophile is Cys285. The residue at position 285 (Cys285) is a Cysteine sulfenic acid (-SOH). Lys456 and Gly459 together coordinate K(+). The Charge relay system role is filled by Glu463.

Belongs to the aldehyde dehydrogenase family. In terms of assembly, dimer of dimers. It depends on K(+) as a cofactor.

It catalyses the reaction betaine aldehyde + NAD(+) + H2O = glycine betaine + NADH + 2 H(+). It functions in the pathway amine and polyamine biosynthesis; betaine biosynthesis via choline pathway; betaine from betaine aldehyde: step 1/1. In terms of biological role, involved in the biosynthesis of the osmoprotectant glycine betaine. Catalyzes the irreversible oxidation of betaine aldehyde to the corresponding acid. The sequence is that of Betaine aldehyde dehydrogenase from Burkholderia ambifaria (strain ATCC BAA-244 / DSM 16087 / CCUG 44356 / LMG 19182 / AMMD) (Burkholderia cepacia (strain AMMD)).